The chain runs to 747 residues: Major facilitator superfamily domain-containing protein 6-B (747 aa).

11 consecutive transmembrane segments (helical) span residues 15–35, 75–95, 222–242, 271–291, 306–326, 391–411, 420–440, 453–470, 485–507, 520–540, and 546–566; these read LLFF…CVLQ, KAVL…IGFV, TIFL…APAV, WGIA…TIFI, IAFI…TQFH, VLFV…FLFW, TTLF…AYFI, VLYI…YISY, GLTH…PPAL, LGLG…FFGA, and GLGM…WLLG. Composition is skewed to polar residues over residues 597–606 and 652–668; these read NQSTSQPNSD and NNDC…QTSA. Disordered stretches follow at residues 597-625 and 652-747; these read NQST…NKPA and NNDC…PTTH. Over residues 675–685 the composition is skewed to low complexity; sequence STSSQPNASSS.

It belongs to the major facilitator superfamily. MFSD6 family.

The protein resides in the membrane. The chain is Major facilitator superfamily domain-containing protein 6-B (mfsd6b) from Danio rerio (Zebrafish).